Here is a 241-residue protein sequence, read N- to C-terminus: Small ribosomal subunit protein uS2 (241 aa).

It belongs to the universal ribosomal protein uS2 family.

The chain is Small ribosomal subunit protein uS2 from Salmonella agona (strain SL483).